Reading from the N-terminus, the 240-residue chain is Chloroplastic group IIB intron splicing facilitator CRS2-B, chloroplastic (240 aa).

This sequence belongs to the PTH family. CRS2 subfamily. In terms of assembly, part of large ribonucleo-protein complexes that include group IIB introns and either CAF1 or CAF2.

It is found in the plastid. The protein localises to the chloroplast stroma. Required for the splicing of group IIB introns in chloroplasts. This is Chloroplastic group IIB intron splicing facilitator CRS2-B, chloroplastic (CRS2B) from Arabidopsis thaliana (Mouse-ear cress).